We begin with the raw amino-acid sequence, 269 residues long: Tropinone reductase homolog At2g29320 (269 aa).

Residue L19 to H43 participates in NADP(+) binding. S152 serves as a coordination point for substrate. Residue Y166 is the Proton acceptor of the active site.

The protein belongs to the short-chain dehydrogenases/reductases (SDR) family. SDR65C subfamily.

The sequence is that of Tropinone reductase homolog At2g29320 from Arabidopsis thaliana (Mouse-ear cress).